The following is a 115-amino-acid chain: MNAIVILFINATLSLGLITVAFWLPHLNIYAEKAGAYECGFDPMSSARLPFSMKFFLIGITFLLFDLEITLLLPLPWAMHSTNTYFTMLVSFLLVSVLALGLMYEWTNKGLEWTE.

3 helical membrane passes run 4-24, 55-75, and 84-104; these read IVILFINATLSLGLITVAFWL, FFLIGITFLLFDLEITLLLPL, and TYFTMLVSFLLVSVLALGLMY.

The protein belongs to the complex I subunit 3 family. In terms of assembly, core subunit of respiratory chain NADH dehydrogenase (Complex I) which is composed of 45 different subunits. Interacts with TMEM186. Interacts with TMEM242.

Its subcellular location is the mitochondrion inner membrane. The enzyme catalyses a ubiquinone + NADH + 5 H(+)(in) = a ubiquinol + NAD(+) + 4 H(+)(out). Core subunit of the mitochondrial membrane respiratory chain NADH dehydrogenase (Complex I) which catalyzes electron transfer from NADH through the respiratory chain, using ubiquinone as an electron acceptor. Essential for the catalytic activity of complex I. The sequence is that of NADH-ubiquinone oxidoreductase chain 3 from Eligmodontia typus (Highland gerbil mouse).